We begin with the raw amino-acid sequence, 280 residues long: MIQTLTDLSALRALVNGWKREGLRVALVPTMGNLHAGHYSLVMLARQYADRVVSSVFVNPTQFGPNEDFARYPRTPEADLRGLEDAGCDALWLPDVDTMYPLGTALATPIHAPGVSDVLEGECRPGHFDGVCTVVARLFNQVQPDVAAFGKKDYQQLAVIRQMVADLAFPIEILGGSIVREADGLAMSSRNQYLSAEDRPISSTIRKVLLQMRDSYAAGTPRAQVEDAASHTLEQAGFRVDYAVVRLPDLSEPGDSHAGARVALIAARLGNTRLIDNLEF.

31–38 (MGNLHAGH) lines the ATP pocket. His38 functions as the Proton donor in the catalytic mechanism. Gln62 contacts (R)-pantoate. Gln62 contributes to the beta-alanine binding site. ATP is bound at residue 150-153 (GKKD). Gln156 lines the (R)-pantoate pocket. Residues Val179 and 187 to 190 (MSSR) each bind ATP.

This sequence belongs to the pantothenate synthetase family. Homodimer.

The protein localises to the cytoplasm. It carries out the reaction (R)-pantoate + beta-alanine + ATP = (R)-pantothenate + AMP + diphosphate + H(+). Its pathway is cofactor biosynthesis; (R)-pantothenate biosynthesis; (R)-pantothenate from (R)-pantoate and beta-alanine: step 1/1. Its function is as follows. Catalyzes the condensation of pantoate with beta-alanine in an ATP-dependent reaction via a pantoyl-adenylate intermediate. The polypeptide is Pantothenate synthetase (Xanthomonas axonopodis pv. citri (strain 306)).